The sequence spans 556 residues: Formate--tetrahydrofolate ligase (556 aa).

ATP is bound at residue 65-72; the sequence is TPAGEGKS.

It belongs to the formate--tetrahydrofolate ligase family.

It catalyses the reaction (6S)-5,6,7,8-tetrahydrofolate + formate + ATP = (6R)-10-formyltetrahydrofolate + ADP + phosphate. It functions in the pathway one-carbon metabolism; tetrahydrofolate interconversion. The sequence is that of Formate--tetrahydrofolate ligase from Streptococcus thermophilus (strain ATCC BAA-491 / LMD-9).